The chain runs to 634 residues: UPF0329 protein ECU07_1850/ECU10_0050 (634 aa).

2 stretches are compositionally biased toward basic and acidic residues: residues 354-365 (REEREKREESKG) and 397-407 (GESKEEDRGEE). A disordered region spans residues 354–438 (REEREKREES…KGSGEKRISE (85 aa)). Positions 408–417 (GGVEAEDPLE) are enriched in acidic residues.

Belongs to the UPF0329 family.

The sequence is that of UPF0329 protein ECU07_1850/ECU10_0050 from Encephalitozoon cuniculi (strain GB-M1) (Microsporidian parasite).